Here is a 750-residue protein sequence, read N- to C-terminus: Circadian input-output histidine kinase CikA (750 aa).

The tract at residues 1 to 173 (MLPAFSPIFR…QVIAQIRQSL (173 aa)) is N-terminal domain. The tract at residues 174–333 (DLSEILNNAV…KNFLGQIGEH (160 aa)) is GAF domain. One can recognise a Histidine kinase domain in the interval 385–609 (NISHELRTPL…IFTTVIPQQN (225 aa)). Position 388 is a phosphohistidine; by autocatalysis (His388). The tract at residues 604 to 750 (VIPQQNFPPT…VQSIQQEPLR (147 aa)) is psR domain, bind KaiB(fs). In terms of domain architecture, Response regulatory spans 631 to 745 (SVIVIEQDEE…LLLQRVQSIQ (115 aa)). Asp680 carries the 4-aspartylphosphate modification.

In the N-terminal section; belongs to the phytochrome family. Homodimer. Part of the circadian clock (KaiA, KaiB, KaiC, CikA, RpaA, SasA), the composition of which varies during the circadian cycle. KaiA and CikA compete for binding to KaiB(fs). Interacts with RpaA.

The enzyme catalyses ATP + protein L-histidine = ADP + protein N-phospho-L-histidine.. Functions in an input pathway to the Kai circadian clock. Senses oxidized quinones via its C-terminal pseudo-receiver domain, providing a link between cell metabolism and the clock. Affects the ratio of phosphorylated to unphosphorylated KaiC, binds quinones via its pseudo-receptor domain. Quinone-binding destabilizes the protein rapidly. Autophosphorylates, does not transfer the phosphate to its pseudo-receiver (PsR) domain. May play a role in cell division. Its function is as follows. Also functions in a two-component CikA/RpaA output pathway from the circadian clock, negatively regulating kaiBC expression independently of labA and of sasA. One of three clock output pathways. Dephosphorylates phospho-RpaA, enhanced by KaiB and KaiC, has only modest kinase activity on RpaA. This chain is Circadian input-output histidine kinase CikA, found in Synechocystis sp. (strain ATCC 27184 / PCC 6803 / Kazusa).